Consider the following 1768-residue polypeptide: Callose synthase 11 (1768 aa).

At 1-308 the chain is on the cytoplasmic side; it reads MRRQRPSVAT…WNVYRSFDRL (308 aa). A helical transmembrane segment spans residues 309–329; it reads WILLLLYLQAAIIVATSDVKF. The Extracellular segment spans residues 330–335; the sequence is PWQDRD. A helical transmembrane segment spans residues 336 to 356; the sequence is VEVALLTVFISWAGLRLLQSV. Residues 357-370 are Cytoplasmic-facing; it reads LDASTQYSLVSRET. Residues 371–391 traverse the membrane as a helical segment; it reads YWLFIRLTLKFVVAVAWTVLF. Over 392-421 the chain is Extracellular; the sequence is SVFYARIWSQKNKDGVWSRAANERVVTFLK. A helical membrane pass occupies residues 422-442; the sequence is VVFVYVIPELLALVLFIVPCI. Topologically, residues 443–480 are cytoplasmic; the sequence is RNWVEELNLGVVYFLTWWFYSKTFVGRGMREGLVDNVK. Residues 481–501 traverse the membrane as a helical segment; that stretch reads YTLFWIIVLATKFIFSYFLQI. At 502-530 the chain is on the extracellular side; the sequence is RPLIAPTRALLNLKDATYNWHEFFGSTHR. Residues 531–551 form a helical membrane-spanning segment; it reads IAVGMLWLPVILVYLMDLQIW. Over 552–1341 the chain is Cytoplasmic; that stretch reads YSIYSSLVGA…FFRMLSFFYT (790 aa). The helical transmembrane segment at 1342–1362 threads the bilayer; it reads TVGYYFNTMLIVFTVYAFLWG. Over 1363-1386 the chain is Extracellular; that stretch reads RLYLALSGVEKIAKDRSSSNEALG. Residues 1387–1407 form a helical membrane-spanning segment; that stretch reads AILNQQFIIQLGLFTALPMIL. The Cytoplasmic segment spans residues 1408–1413; sequence ENSLER. A helical membrane pass occupies residues 1414-1434; sequence GFLPAVWDFITMQLQLASFFY. Residues 1435–1481 lie on the Extracellular side of the membrane; that stretch reads TFSMGTRTHYFGRTILHGGAKYRATGRGFVVEHKKFAENYRLYARTH. A helical membrane pass occupies residues 1482 to 1502; it reads FIKAIELAIILLVYAAYSPLA. Residues 1503-1508 lie on the Cytoplasmic side of the membrane; sequence KSSFVY. Residues 1509-1529 traverse the membrane as a helical segment; that stretch reads ILMTISSWFLITSWIISPFLF. The Extracellular portion of the chain corresponds to 1530–1583; the sequence is NPSGFDWLKTVNDFDDFIAWLWSRGGLFTKADQSWFTWWNEEQEHLKTTGVWGK. Residues 1584–1604 traverse the membrane as a helical segment; it reads LLEIILDLRFFFFQYSIVYHL. The Cytoplasmic portion of the chain corresponds to 1605-1612; sequence RIAENRTS. Residues 1613-1633 form a helical membrane-spanning segment; sequence IGVYLISWGCIIGIVAIYITT. Residues 1634–1649 lie on the Extracellular side of the membrane; the sequence is IYAQKRYSVKEHIKYR. A helical membrane pass occupies residues 1650–1670; the sequence is FIQFLVILLTVLVVVMMLQFT. Residues 1671-1673 are Cytoplasmic-facing; it reads KLT. A helical transmembrane segment spans residues 1674-1694; it reads VVDLLISLLAFVPTGWGLISI. At 1695–1719 the chain is on the extracellular side; sequence AQVLKPFLLSTVVWDTVISVARFYD. Residues 1720–1740 traverse the membrane as a helical segment; that stretch reads LFFGLIVMAPVALLSWLPGFQ. The Cytoplasmic segment spans residues 1741–1768; it reads NMQTRILFNEAFSRGLQISIILAGKKST.

Belongs to the glycosyltransferase 48 family. As to expression, ubiquitous.

The protein resides in the cell membrane. The enzyme catalyses [(1-&gt;3)-beta-D-glucosyl](n) + UDP-alpha-D-glucose = [(1-&gt;3)-beta-D-glucosyl](n+1) + UDP + H(+). In terms of biological role, required the formation of the callose wall separating the tetraspores (interstitial wall), but not for the callose wall surrounding the pollen mother cells (peripheral wall). Functionally redudant to CALS12 (GSL5). During plant growth and development, callose is found as a transitory component of the cell plate in dividing cells, is a major component of pollen mother cell walls and pollen tubes, and is found as a structural component of plasmodesmatal canals. In Arabidopsis thaliana (Mouse-ear cress), this protein is Callose synthase 11 (CALS11).